Consider the following 438-residue polypeptide: Aspartate--tRNA(Asp/Asn) ligase (438 aa).

Glu176 is an L-aspartate binding site. Residues 198-201 (QLYK) form an aspartate region. Residue Arg220 coordinates L-aspartate. ATP-binding positions include 220-222 (RAE), 228-230 (RHL), and Glu361. Glu361 and Ser364 together coordinate Mg(2+). L-aspartate-binding residues include Ser364 and Arg368. Residue 409–412 (GADR) participates in ATP binding.

The protein belongs to the class-II aminoacyl-tRNA synthetase family. Type 2 subfamily. Homodimer. Requires Mg(2+) as cofactor.

It is found in the cytoplasm. It carries out the reaction tRNA(Asx) + L-aspartate + ATP = L-aspartyl-tRNA(Asx) + AMP + diphosphate. Aspartyl-tRNA synthetase with relaxed tRNA specificity since it is able to aspartylate not only its cognate tRNA(Asp) but also tRNA(Asn). Reaction proceeds in two steps: L-aspartate is first activated by ATP to form Asp-AMP and then transferred to the acceptor end of tRNA(Asp/Asn). The polypeptide is Aspartate--tRNA(Asp/Asn) ligase (Methanococcus maripaludis (strain C7 / ATCC BAA-1331)).